A 130-amino-acid polypeptide reads, in one-letter code: Small ribosomal subunit protein uS9 (130 aa).

This sequence belongs to the universal ribosomal protein uS9 family.

The polypeptide is Small ribosomal subunit protein uS9 (Exiguobacterium sp. (strain ATCC BAA-1283 / AT1b)).